We begin with the raw amino-acid sequence, 452 residues long: Bis(5'-adenosyl)-triphosphatase ENPP4 (452 aa).

The signal sequence occupies residues 1–15 (MKLLVILLFSGLITG). Over 16 to 406 (FRSDSSSSLP…DQWCINLPEA (391 aa)) the chain is Extracellular. Positions 34 and 70 each coordinate Zn(2+). The active-site AMP-threonine intermediate is Thr70. The substrate site is built by Asn91 and Tyr154. Asn155 and Asn166 each carry an N-linked (GlcNAc...) asparagine glycan. 4 residues coordinate Zn(2+): Asp189, His193, Asp237, and His238. Asp189 lines the substrate pocket. An intrachain disulfide couples Cys254 to Cys287. Asn276 carries an N-linked (GlcNAc...) asparagine glycan. His335 lines the Zn(2+) pocket. Cys393 and Cys400 are oxidised to a cystine. A helical transmembrane segment spans residues 407 to 427 (IAIVIGSLLVLTMLTCLIIIM). The Cytoplasmic portion of the chain corresponds to 428–452 (QNRLSVPRPFSRLQLQEDDDDPLIG).

Belongs to the nucleotide pyrophosphatase/phosphodiesterase family. Requires Zn(2+) as cofactor.

The protein resides in the cell membrane. It carries out the reaction P(1),P(3)-bis(5'-adenosyl) triphosphate + H2O = AMP + ADP + 2 H(+). Hydrolyzes extracellular Ap3A into AMP and ADP, and Ap4A into AMP and ATP. Ap3A and Ap4A are diadenosine polyphosphates thought to induce proliferation of vascular smooth muscle cells. Acts as a procoagulant, mediating platelet aggregation at the site of nascent thrombus via release of ADP from Ap3A and activation of ADP receptors. The polypeptide is Bis(5'-adenosyl)-triphosphatase ENPP4 (ENPP4) (Pongo abelii (Sumatran orangutan)).